A 494-amino-acid polypeptide reads, in one-letter code: MVLLAGTGPEGGGARCMTPPPPSPPRGAQVEEDPADYEEFEDFSSLPDTRSIASDDSFYPFEDEEEHGVESAESVPEGVPESVPETATLLRAACANNVGLLRTLVRRGVSVEEAQETDRNGRTGLIVACYHGFVDTVVALAECPHVDVNWQDSEGNTALITAAQAGHAIITNYLLNYFPGLDLERRNAFGFTALMKAAMQGRTDCIRALMLAGADVHARDPRRGMSPQEWATYTGRVDAVRLMQRLLERPCPEQFWEKYRPELPPPPEAARKPAGSKNCLQRLTDCVLSVLTPRSVRGPEDGGVLDHMVRMTTSLYSPAVAIVCQTVCPESPPSVGKRRLAVQEILAARAARGPQAQEEDEVGGAGQRGRTGQEDADSREGSPRAGLPPALGSRGPAAPAPRKASLLPLQRLRRRSVRPGVVVPRVRVSKAPAPTFQPERPARKGSTKDSGHLQIPKWRYKEAKEEKRKAEEAEKKRQAEAQKERRTAPWKKRT.

A disordered region spans residues 1-80 (MVLLAGTGPE…SAESVPEGVP (80 aa)). Residues 30–42 (VEEDPADYEEFED) show a composition bias toward acidic residues. ANK repeat units lie at residues 84–113 (PETATLLRAACANNVGLLRTLVRRGVSVEE), 120–150 (NGRTGLIVACYHGFVDTVVALAECPHVDVNW), 154–183 (EGNTALITAAQAGHAIITNYLLNYFPGLDL), 189–218 (FGFTALMKAAMQGRTDCIRALMLAGADVHA), and 223–255 (RGMSPQEWATYTGRVDAVRLMQRLLERPCPEQF). The interval 349–494 (RAARGPQAQE…RRTAPWKKRT (146 aa)) is disordered. Over residues 371-382 (TGQEDADSREGS) the composition is skewed to basic and acidic residues. The residue at position 405 (serine 405) is a Phosphoserine. 2 stretches are compositionally biased toward basic and acidic residues: residues 440 to 451 (RPARKGSTKDSG) and 459 to 487 (RYKEAKEEKRKAEEAEKKRQAEAQKERRT). The stretch at 459 to 488 (RYKEAKEEKRKAEEAEKKRQAEAQKERRTA) forms a coiled coil.

This Homo sapiens (Human) protein is Ankyrin repeat domain-containing protein 33B (ANKRD33B).